The sequence spans 373 residues: tRNA-specific 2-thiouridylase MnmA (373 aa).

ATP is bound by residues 12–19 (GMSGGVDS) and methionine 38. Residues 98–100 (NPD) form an interaction with target base in tRNA region. Cysteine 103 serves as the catalytic Nucleophile. Cysteine 103 and cysteine 200 are oxidised to a cystine. Position 127 (glycine 127) interacts with ATP. Positions 150 to 152 (KDQ) are interaction with tRNA. Cysteine 200 acts as the Cysteine persulfide intermediate in catalysis. Residues 312–313 (RY) form an interaction with tRNA region.

This sequence belongs to the MnmA/TRMU family.

It is found in the cytoplasm. The catalysed reaction is S-sulfanyl-L-cysteinyl-[protein] + uridine(34) in tRNA + AH2 + ATP = 2-thiouridine(34) in tRNA + L-cysteinyl-[protein] + A + AMP + diphosphate + H(+). Its function is as follows. Catalyzes the 2-thiolation of uridine at the wobble position (U34) of tRNA, leading to the formation of s(2)U34. This chain is tRNA-specific 2-thiouridylase MnmA, found in Streptococcus pneumoniae (strain ATCC BAA-255 / R6).